The following is a 389-amino-acid chain: LL-diaminopimelate aminotransferase (389 aa).

Y16 and G41 together coordinate substrate. Residues Y70, 104–105, Y129, N179, Y210, and 239–241 contribute to the pyridoxal 5'-phosphate site; these read SK and SLS. Substrate is bound by residues K105, Y129, and N179. K242 carries the post-translational modification N6-(pyridoxal phosphate)lysine. Residue R250 coordinates pyridoxal 5'-phosphate. R369 lines the substrate pocket.

It belongs to the class-I pyridoxal-phosphate-dependent aminotransferase family. LL-diaminopimelate aminotransferase subfamily. In terms of assembly, homodimer. The cofactor is pyridoxal 5'-phosphate.

It carries out the reaction (2S,6S)-2,6-diaminopimelate + 2-oxoglutarate = (S)-2,3,4,5-tetrahydrodipicolinate + L-glutamate + H2O + H(+). It functions in the pathway amino-acid biosynthesis; L-lysine biosynthesis via DAP pathway; LL-2,6-diaminopimelate from (S)-tetrahydrodipicolinate (aminotransferase route): step 1/1. Involved in the synthesis of meso-diaminopimelate (m-DAP or DL-DAP), required for both lysine and peptidoglycan biosynthesis. Catalyzes the direct conversion of tetrahydrodipicolinate to LL-diaminopimelate. The chain is LL-diaminopimelate aminotransferase from Nitratidesulfovibrio vulgaris (strain DSM 19637 / Miyazaki F) (Desulfovibrio vulgaris).